The chain runs to 272 residues: Serine/arginine-rich splicing factor 5 (272 aa).

Residues 4-74 enclose the RRM 1 domain; the sequence is CRVFIGRLNP…ERVTIEHARA (71 aa). The tract at residues 73–105 is disordered; that stretch reads RARSRGGRGRGRYSDRFSSRRPRNDRRNAPPVR. The span at 74–83 shows a compositional bias: basic residues; it reads ARSRGGRGRG. Phosphoserine is present on serine 86. The 74-residue stretch at 108-181 folds into the RRM 2 domain; sequence NRLIVENLSS…RKIKLIEGSK (74 aa). At lysine 167 the chain carries N6-acetyllysine. A disordered region spans residues 174-272; that stretch reads IKLIEGSKRH…SRSRSVDSGN (99 aa). The segment covering 182 to 229 has biased composition (basic residues); it reads RHSRSRSRSRSRTRSSSRSRSRSRSRSRKSYSRSRSRSRSRSRSKSRS. Phosphoserine is present on residues serine 227, serine 229, serine 233, serine 250, and serine 253. Positions 242 to 254 are enriched in low complexity; sequence RGSSSRSKSPASV.

Belongs to the splicing factor SR family. In terms of assembly, interacts (via RS domain) with PHF5A (via N-terminus). Found in a pre-mRNA splicing complex with SRSF4/SFRS4, SRSF5/SFRS5, SNRNP70, SNRPA1, SRRM1 and SRRM2. Extensively phosphorylated on serine residues in the RS domain.

The protein localises to the nucleus. In terms of biological role, plays a role in constitutive splicing and can modulate the selection of alternative splice sites. In Homo sapiens (Human), this protein is Serine/arginine-rich splicing factor 5 (SRSF5).